The sequence spans 503 residues: Cell wall integrity and stress response component 2 (503 aa).

An N-terminal signal peptide occupies residues 1–23 (MHLDLIHKSFILVWLIYIRAALA). Over 24–325 (DQFTYKACYS…KGLSGGAIAG (302 aa)) the chain is Extracellular. The region spanning 25–118 (QFTYKACYSA…SSAMNVYINN (94 aa)) is the WSC domain. The interval 124-260 (DSTSSTATST…STPSSTSIGT (137 aa)) is disordered. Residues 326–346 (VVVGVVCGTVALLALALFFFV) form a helical membrane-spanning segment. Residues 347 to 503 (WKKRRQSSQH…AKDSNNSSLR (157 aa)) lie on the Cytoplasmic side of the membrane. Threonine 402 carries the post-translational modification Phosphothreonine. Serine 455 and serine 458 each carry phosphoserine. The interval 470 to 503 (IVNPDNVSSNIGSNVSDGDDDYDDAKDSNNSSLR) is disordered.

N-glycosylated.

Its subcellular location is the cell membrane. The chain is Cell wall integrity and stress response component 2 (WSC2) from Saccharomyces cerevisiae (strain ATCC 204508 / S288c) (Baker's yeast).